Consider the following 145-residue polypeptide: MNFKYIVAVSFLIASAYARSVQNDEQSLSQRDVLEEEESLREIRGIGGKILSGLKTALKGAAKELASTYLHRKRTAEEHEVMKRLEAVMRDLDSLDYPEEASERETRGFNQDEIANLFTKKEKRILGPVLGLVGSALGGLIKKIG.

Residues 1–18 form the signal peptide; sequence MNFKYIVAVSFLIASAYA. 2 propeptides span residues 19–43 and 75–122; these read RSVQNDEQSLSQRDVLEEEESLREI and TAEE…TKKE. Isoleucine 144 bears the Isoleucine amide mark.

The protein belongs to the bombinin family. In terms of tissue distribution, expressed by the skin glands.

Its subcellular location is the secreted. Functionally, maximin-3 shows antibacterial activity against both Gram-positive and Gram-negative bacteria. It also shows antimicrobial activity against the fungus C.albicans, but not against A.flavus nor P.uticale. It has little hemolytic activity. It possess a significant cytotoxicity against tumor cell lines. It possess a significant anti-HIV activity. It shows high spermicidal activity. Maximin-H11 shows antimicrobial activity against bacteria and against the fungus C.albicans. Shows strong hemolytic activity. This is Maximins 3/H11 type 3 from Bombina maxima (Giant fire-bellied toad).